Here is a 394-residue protein sequence, read N- to C-terminus: Phosphopentomutase (394 aa).

Residues aspartate 10, aspartate 282, histidine 287, aspartate 323, histidine 324, and histidine 335 each contribute to the Mn(2+) site.

This sequence belongs to the phosphopentomutase family. Requires Mn(2+) as cofactor.

It localises to the cytoplasm. It catalyses the reaction 2-deoxy-alpha-D-ribose 1-phosphate = 2-deoxy-D-ribose 5-phosphate. The enzyme catalyses alpha-D-ribose 1-phosphate = D-ribose 5-phosphate. The protein operates within carbohydrate degradation; 2-deoxy-D-ribose 1-phosphate degradation; D-glyceraldehyde 3-phosphate and acetaldehyde from 2-deoxy-alpha-D-ribose 1-phosphate: step 1/2. In terms of biological role, isomerase that catalyzes the conversion of deoxy-ribose 1-phosphate (dRib-1-P) and ribose 1-phosphate (Rib-1-P) to deoxy-ribose 5-phosphate (dRib-5-P) and ribose 5-phosphate (Rib-5-P), respectively. This is Phosphopentomutase from Dictyoglomus turgidum (strain DSM 6724 / Z-1310).